A 389-amino-acid polypeptide reads, in one-letter code: MIQIDTIPKELQSIQPFVRRFNELEAHNPVIAYWSLYWAAQMALSSSHGVSNECKDFLLSLIEHLEDLRKNLGENENVSDETSAKAYVESFSLEVLVQAERNSKNGKPDVQAYLAARDFLELSRIWGPPTEQITKSIKFCKLRALQVANPQRKAKTPSNHATEELQQSSTNSTTLPTQEAAVETNASASHETSFALPTTSPAASLSISPTKSAAVSSEPNVEADVKSLSSTPAAPQLNSPSHSYEPTTFPSTTSITENLPTIDPTRSTRSSSHIQSLSPESKQTSDGHRPPSPTSITTTSTSIDPSVAFSSKSTLATTRTNAPLSRPSQPTKASPLNKFSALEAIQSARSHARYAYSALDYEDTTTAIHHLKSALKLLEEEEQGNHTAD.

Residues asparagine 149–proline 335 are disordered. Composition is skewed to polar residues over residues threonine 156 to threonine 177, threonine 184 to proline 219, and serine 227 to lysine 282. A compositionally biased stretch (low complexity) spans threonine 294–serine 306. Residues alanine 308–serine 334 are compositionally biased toward polar residues.

This sequence belongs to the VTA1 family. Homodimer (in cytoplasm).

Its subcellular location is the cytoplasm. It localises to the endosome membrane. In terms of biological role, has a role in the formation of the multivesicular body (MVB). Required for the sorting of lipids to form intralumenal vesicles and for fluid-phase transport to the vacuole. Required for sorting several plasma membrane proteins into the MVB. This Schizosaccharomyces pombe (strain 972 / ATCC 24843) (Fission yeast) protein is Vacuolar protein sorting-associated protein vts1 (vts1).